The following is a 239-amino-acid chain: Ribonuclease PH (239 aa).

Phosphate is bound by residues Arg86 and Gly124 to Arg126.

The protein belongs to the RNase PH family. As to quaternary structure, homohexameric ring arranged as a trimer of dimers.

It catalyses the reaction tRNA(n+1) + phosphate = tRNA(n) + a ribonucleoside 5'-diphosphate. In terms of biological role, phosphorolytic 3'-5' exoribonuclease that plays an important role in tRNA 3'-end maturation. Removes nucleotide residues following the 3'-CCA terminus of tRNAs; can also add nucleotides to the ends of RNA molecules by using nucleoside diphosphates as substrates, but this may not be physiologically important. Probably plays a role in initiation of 16S rRNA degradation (leading to ribosome degradation) during starvation. The sequence is that of Ribonuclease PH from Rickettsia akari (strain Hartford).